The following is an 898-amino-acid chain: Nitrate reductase [NAD(P)H] (898 aa).

Over residues 1-15 (MAASVENRRFTHHEP) the composition is skewed to basic and acidic residues. Residues 1–65 (MAASVENRRF…SSSEDENEND (65 aa)) are disordered. A Mo-molybdopterin-binding site is contributed by Cys-180. Residues 528–603 (SKMFSMSEVK…LEDYRIGELI (76 aa)) form the Cytochrome b5 heme-binding domain. Heme contacts are provided by His-563 and His-586. Residues 642-754 (GAKIPTKLVY…KGPLGHVEYT (113 aa)) enclose the FAD-binding FR-type domain. FAD contacts are provided by residues 694–697 (RAYT), 711–715 (VVKIY), Phe-716, Phe-723, 728–730 (LMS), and Thr-781.

This sequence belongs to the nitrate reductase family. As to quaternary structure, homodimer. It depends on FAD as a cofactor. Requires heme as cofactor. Mo-molybdopterin is required as a cofactor.

The enzyme catalyses nitrite + NAD(+) + H2O = nitrate + NADH + H(+). The catalysed reaction is nitrite + NADP(+) + H2O = nitrate + NADPH + H(+). Nitrate reductase is a key enzyme involved in the first step of nitrate assimilation in plants, fungi and bacteria. The chain is Nitrate reductase [NAD(P)H] (NIA1) from Betula pendula (European white birch).